A 1767-amino-acid polypeptide reads, in one-letter code: Endo-alpha-N-acetylgalactosaminidase (1767 aa).

An N-terminal signal peptide occupies residues 1–39 (MNKGLFEKRCKYSIRKFSLGVASVMIGAAFFGTSPVLAD). Composition is skewed to basic and acidic residues over residues 61 to 75 (KEND…KVGE) and 84 to 111 (DGPK…DKPA). Disordered regions lie at residues 61–124 (KEND…VTPE) and 301–324 (VKTD…GPEV). A compositionally biased stretch (low complexity) spans 112-124 (AAKPETPKTVTPE). The segment covering 304–324 (DNQEGVKTEDTPAEKETGPEV) has biased composition (basic and acidic residues). Ca(2+)-binding residues include aspartate 577, asparagine 579, aspartate 581, asparagine 583, and aspartate 588. A catalytic region spans residues 602–893 (GWEKVKDITA…DVMTKYFQHF (292 aa)). Aspartate 658 lines the substrate pocket. Catalysis depends on aspartate 764, which acts as the Nucleophile. The active-site Proton donor/acceptor is glutamate 796. Ca(2+)-binding residues include aspartate 1233, glutamate 1235, glutamate 1281, tryptophan 1284, and aspartate 1411. A disordered region spans residues 1711 to 1730 (LASEQGKTPDYKQEIARPET). A compositionally biased stretch (basic and acidic residues) spans 1717-1730 (KTPDYKQEIARPET). The LPXTG sorting signal signature appears at 1735–1739 (LPATG). Pentaglycyl murein peptidoglycan amidated threonine is present on threonine 1738. Residues 1739-1767 (GESQSDTALILASVSLALSALFVVKTKKD) constitute a propeptide, removed by sortase.

The protein belongs to the glycosyl hydrolase 101 family. A subfamily.

Its subcellular location is the secreted. The protein localises to the cell wall. The enzyme catalyses a 3-O-[beta-D-galactosyl-(1-&gt;3)-N-acetyl-alpha-D-galactosaminyl]-L-threonyl-[protein] + H2O = beta-D-galactosyl-(1-&gt;3)-N-acetyl-D-galactosamine + L-threonyl-[protein]. The catalysed reaction is a 3-O-[beta-D-galactosyl-(1-&gt;3)-N-acetyl-alpha-D-galactosaminyl]-L-seryl-[protein] + H2O = beta-D-galactosyl-(1-&gt;3)-N-acetyl-D-galactosamine + L-seryl-[protein]. In terms of biological role, involved in the breakdown of mucin-type O-linked glycans. Specifically removes the T-antigen disaccharide (Gal-beta-1,3-GalNAc-alpha) from extracellular host glycoproteins. Representative of a broadly important class of virulence factors. This Streptococcus pneumoniae serotype 4 (strain ATCC BAA-334 / TIGR4) protein is Endo-alpha-N-acetylgalactosaminidase.